We begin with the raw amino-acid sequence, 827 residues long: Translation initiation factor IF-2 (827 aa).

The segment at 49-205 is disordered; the sequence is ALNREKEEKE…GAPDKKREWE (157 aa). Basic and acidic residues-rich tracts occupy residues 50–73, 96–106, 116–129, 137–150, 157–168, and 182–205; these read LNRE…KAEA, RPREQRSDRPQ, PEPR…RPGE, RPRD…KERG, FGEKKERPPFPR, and EAPK…REWE. Positions 326 to 495 constitute a tr-type G domain; the sequence is PRPPIVTVMG…LLVADLKELK (170 aa). Residues 335 to 342 form a G1 region; it reads GHVDHGKT. 335 to 342 provides a ligand contact to GTP; sequence GHVDHGKT. The tract at residues 360-364 is G2; the sequence is GITQH. The tract at residues 381–384 is G3; it reads DTPG. Residues 381-385 and 435-438 each bind GTP; these read DTPGH and NKID. Positions 435 to 438 are G4; that stretch reads NKID. Residues 471–473 are G5; sequence SAL.

Belongs to the TRAFAC class translation factor GTPase superfamily. Classic translation factor GTPase family. IF-2 subfamily.

The protein localises to the cytoplasm. In terms of biological role, one of the essential components for the initiation of protein synthesis. Protects formylmethionyl-tRNA from spontaneous hydrolysis and promotes its binding to the 30S ribosomal subunits. Also involved in the hydrolysis of GTP during the formation of the 70S ribosomal complex. The chain is Translation initiation factor IF-2 from Carboxydothermus hydrogenoformans (strain ATCC BAA-161 / DSM 6008 / Z-2901).